A 457-amino-acid chain; its full sequence is L-asparaginase-like protein GL17509 (457 aa).

An N-terminal signal peptide occupies residues methionine 1–alanine 20. 3 cysteine pairs are disulfide-bonded: cysteine 72–cysteine 78, cysteine 172–cysteine 188, and cysteine 327–cysteine 354.

The protein belongs to the Ntn-hydrolase family.

In Drosophila persimilis (Fruit fly), this protein is L-asparaginase-like protein GL17509.